We begin with the raw amino-acid sequence, 135 residues long: ATP synthase epsilon chain (135 aa).

Belongs to the ATPase epsilon chain family. In terms of assembly, F-type ATPases have 2 components, CF(1) - the catalytic core - and CF(0) - the membrane proton channel. CF(1) has five subunits: alpha(3), beta(3), gamma(1), delta(1), epsilon(1). CF(0) has three main subunits: a, b and c.

Its subcellular location is the cell inner membrane. Its function is as follows. Produces ATP from ADP in the presence of a proton gradient across the membrane. The chain is ATP synthase epsilon chain from Granulibacter bethesdensis (strain ATCC BAA-1260 / CGDNIH1).